The primary structure comprises 1377 residues: MLKSIQRNGKKQKNGSKDKEPTPPKEQPLVNGNHDMNGHASDSVAPTEQQNGETKKKSDSEVMEIIQDAGFTVQIMSPGVEPLSIQVSSMELVQEIHQLLMDREDTCHRTCFSLQLDGVTLDNFAELKNVEGLKEGSVIKVVEEPYTMREARIHVRHVRDLLKSMDPADAYNGVDCSSLTFLHTITAGDILEKKKGRSDSVDCTPPEYIMPGAKERPLLPLQPGVGKKGPQPLKVLTTSAWNPPPGPRKLHGDLMYLYVVTMEDKRFHISACPRGFYINQSTDDTFEPRPDNPSYLCHSLIDLLSQISPTFRRCFAQMQKKRTQRHPFERVATPYQVYTWSAPTLDHTIDAIRAEDTFSSKLGYEEHIPGQTRDWNEELQTTRELPRETLPERLLRERAIFKVHSDFVTAATRGAMAVIDGNVMAINPGEDAKMQMFIWNNIFFSLGFDVRDHYKELGGDAAAFVAPRNDLHGVRVYSAVDVEGLYTLGTVVIDYRGYRVTAQSIIPGILEREQEQSVVYGSIDFGKTVLSHEKYLELLNNAGKHLKIYPHSVLNDDEEEIELCSSVECKGIIGNDGRHYILDLLRTFPPDVNFLKLDEELSKDCKAFGFPIEHKHKLSCLRQELLEAFIESRYLLFIKHAAFQLQQLNTNKRQQKQDTPKEETKAIEPAAKEDSANNNKEEPAAKKGEPKAATGGVPKVETEEAKKLMESLLSSDEKNESREVVKRACEAVGSLKDYEFDIRFNPDVYSPGIQHVDNPNAANSIKKQKQLVKDAAEFLVKHQIPSFVHDCLDHTAAPMDGSTLTETLHSRGINVRYLGKVANLLAKIKQLEYLHTIAVSELIIRAAKHIFVTYMQNTEMMSMAAAISHFLNCFLTTATSVSSESDVLTKSGSSGKQQRKQNKRTAAGGGKGGKSSFQCTQDNNEWQLLTSKSLWAQIQQELKSYWDYDLLPAGTVDSADPVVTHNHLQKISLLRAFCLKTGVQILLREYNFETKNKPTFNENDIVNVFPVVKHINPRASDAYNFYTTGQTKIQQGYFKDGYDLISEALNLLNNVYGAMHPENAQCLRMLARLSYIMGDPQEALAIQQRAVLMSERVNGIDHPYTIAEYAPLALYCFANSQISTALKLLYRARYLATIVCGDNHPDIALLDSNISLILHAVGEYELSLRFLEHALALNIKYYGEKSLKVAVSYHLVARTQSCMGDFRSALNNEKETYAIYKQQLGEAHEKTQESSECLRHLTQQAVVLQKKMNDIYSNGKLTTGLPPIHIQPPSMGSVLDMLNAINGIIFVQISSKEIANLKNEIEKRQKEGGAAGESSVAQANQEEVDRLLTETMAKTAAGIPFEEQDNYELPLPAATTGDEASSSSKANPVASSS.

A disordered region spans residues 1-61 (MLKSIQRNGK…GETKKKSDSE (61 aa)). Residues 353-595 (RAEDTFSSKL…RTFPPDVNFL (243 aa)) form the Clu domain. One copy of the TPR 1 repeat lies at 519–552 (VYGSIDFGKTVLSHEKYLELLNNAGKHLKIYPHS). 2 disordered regions span residues 651–700 (NKRQ…VPKV) and 886–917 (DVLT…KSSF). Residues 655-690 (QKQDTPKEETKAIEPAAKEDSANNNKEEPAAKKGEP) are compositionally biased toward basic and acidic residues. Over residues 886–896 (DVLTKSGSSGK) the composition is skewed to polar residues. TPR repeat units follow at residues 1022–1055 (AYNF…LNNV), 1148–1181 (ALLD…NIKY), and 1183–1216 (GEKS…EKET). The tract at residues 1310 to 1377 (KEGGAAGESS…SKANPVASSS (68 aa)) is disordered. The segment covering 1364 to 1377 (ASSSSKANPVASSS) has biased composition (low complexity).

This sequence belongs to the CLU family.

It is found in the cytoplasm. MRNA-binding protein involved in proper cytoplasmic distribution of mitochondria. The protein is Clustered mitochondria protein homolog of Culex quinquefasciatus (Southern house mosquito).